A 516-amino-acid chain; its full sequence is Putative sel1-like repeat-containing protein R850 (516 aa).

Sel1-like repeat units lie at residues 103–138 and 230–265; these read ALTY…NMNS and SISQ…KQGD.

The sequence is that of Putative sel1-like repeat-containing protein R850 from Acanthamoeba polyphaga (Amoeba).